The following is a 204-amino-acid chain: Methylthioribulose-1-phosphate dehydratase (204 aa).

Zn(2+) is bound by residues His94 and His96.

Belongs to the aldolase class II family. MtnB subfamily. Requires Zn(2+) as cofactor.

The enzyme catalyses 5-(methylsulfanyl)-D-ribulose 1-phosphate = 5-methylsulfanyl-2,3-dioxopentyl phosphate + H2O. It functions in the pathway amino-acid biosynthesis; L-methionine biosynthesis via salvage pathway; L-methionine from S-methyl-5-thio-alpha-D-ribose 1-phosphate: step 2/6. Functionally, catalyzes the dehydration of methylthioribulose-1-phosphate (MTRu-1-P) into 2,3-diketo-5-methylthiopentyl-1-phosphate (DK-MTP-1-P). The protein is Methylthioribulose-1-phosphate dehydratase of Pseudomonas syringae pv. syringae (strain B728a).